The chain runs to 335 residues: G-protein coupled receptor 157 (335 aa).

Over 1 to 15 (MQPSPPPTELVPSER) the chain is Extracellular. Residues 16-36 (AVVLLSCALSALGSGLLVATH) form a helical membrane-spanning segment. The Cytoplasmic segment spans residues 37–48 (ALWPDLRSRARR). Residues 49–69 (LLLFLSLADLLSAASYFYGVL) form a helical membrane-spanning segment. Over 70–87 (QNFAGPSWDCVLQGALST) the chain is Extracellular. The helical transmembrane segment at 88-108 (FANTSSFFWTVAIALYLYLSI) threads the bilayer. The Cytoplasmic segment spans residues 109–119 (VRAARGPRTDR). A helical transmembrane segment spans residues 120–140 (LLWAFHVVSWGVPLVITVAAV). The Extracellular portion of the chain corresponds to 141–166 (ALKKIGYDASDVSVGWCWIDLEAKDH). Residues 167 to 187 (VLWMLLTGKLWEMLAYVLLPL) form a helical membrane-spanning segment. Over 188–226 (LYLLVRKHINRAHTALSEYRPILSQEHRLLRHSSMADKK) the chain is Cytoplasmic. The chain crosses the membrane as a helical span at residues 227 to 247 (LVLIPLIFIGLRVWSTVRFVL). Residues 248-258 (TLCGSPAVQTP) are Extracellular-facing. The chain crosses the membrane as a helical span at residues 259–279 (VLVVLHGIGNTFQGGANCIMF). Residues 280 to 335 (VLCTRAVRTRLFSLCCCCCSSQPPTKSPAGTPKAPAPSKPGESQESQGTPGELPST) are Cytoplasmic-facing. A disordered region spans residues 300–335 (SQPPTKSPAGTPKAPAPSKPGESQESQGTPGELPST). Polar residues predominate over residues 320–335 (GESQESQGTPGELPST).

This sequence belongs to the G-protein coupled receptor 2 family.

It localises to the cell projection. The protein localises to the cilium membrane. Orphan receptor that promotes neuronal differentiation of radial glial progenitors (RGPs). The activity of this receptor is mediated by a G(q)-protein that activates a phosphatidylinositol-calcium second messenger. This chain is G-protein coupled receptor 157 (GPR157), found in Homo sapiens (Human).